The following is a 306-amino-acid chain: Probable protein ABIL1 (306 aa).

The tract at residues lysine 200 to lysine 236 is disordered.

It belongs to the ABI family. Binds SCAR.

The protein resides in the cytoplasm. Its subcellular location is the cytoskeleton. In terms of biological role, involved in regulation of actin and microtubule organization. Part of a WAVE complex that activates the Arp2/3 complex. The polypeptide is Probable protein ABIL1 (Oryza sativa subsp. japonica (Rice)).